Consider the following 129-residue polypeptide: Small ribosomal subunit protein uS11 (129 aa).

Belongs to the universal ribosomal protein uS11 family. Part of the 30S ribosomal subunit. Interacts with proteins S7 and S18. Binds to IF-3.

Functionally, located on the platform of the 30S subunit, it bridges several disparate RNA helices of the 16S rRNA. Forms part of the Shine-Dalgarno cleft in the 70S ribosome. The sequence is that of Small ribosomal subunit protein uS11 from Oleidesulfovibrio alaskensis (strain ATCC BAA-1058 / DSM 17464 / G20) (Desulfovibrio alaskensis).